The sequence spans 134 residues: Profilin-4 (134 aa).

Cys-13 and Cys-118 are joined by a disulfide. Positions 84–100 (AVIRGKKGSGGITIKKT) match the Involved in PIP2 interaction motif. Thr-114 carries the phosphothreonine modification.

This sequence belongs to the profilin family. In terms of assembly, occurs in many kinds of cells as a complex with monomeric actin in a 1:1 ratio. In terms of processing, phosphorylated by MAP kinases.

Its subcellular location is the cytoplasm. The protein localises to the cytoskeleton. Functionally, binds to actin and affects the structure of the cytoskeleton. At high concentrations, profilin prevents the polymerization of actin, whereas it enhances it at low concentrations. The protein is Profilin-4 of Olea europaea (Common olive).